The sequence spans 624 residues: Ubiquitin carboxyl-terminal hydrolase 16 (624 aa).

Positions 46-620 (VGLSNPANDC…EVYLLFYEIE (575 aa)) constitute a USP domain. Catalysis depends on Cys55, which acts as the Nucleophile. The active-site Proton acceptor is the His424. Positions 453–573 (SENPSRVASP…ATDTEASASA (121 aa)) are disordered. The span at 479 to 496 (SPPASTSTNSPLSLTPDS) shows a compositional bias: low complexity. Residues 518-544 (VSFQSTHSSSKQTISPTSAARNSSSLD) are compositionally biased toward polar residues. Residues 546 to 573 (ARLSSPASRSSLAERNASATDTEASASA) are compositionally biased toward low complexity.

It belongs to the peptidase C19 family.

The catalysed reaction is Thiol-dependent hydrolysis of ester, thioester, amide, peptide and isopeptide bonds formed by the C-terminal Gly of ubiquitin (a 76-residue protein attached to proteins as an intracellular targeting signal).. The chain is Ubiquitin carboxyl-terminal hydrolase 16 (ubp16) from Emericella nidulans (strain FGSC A4 / ATCC 38163 / CBS 112.46 / NRRL 194 / M139) (Aspergillus nidulans).